A 353-amino-acid chain; its full sequence is Photosystem II D2 protein (353 aa).

Threonine 2 carries the post-translational modification N-acetylthreonine. Threonine 2 bears the Phosphothreonine mark. Residues 41–61 (CAYFALGGWFTGTTFVTSWYT) form a helical membrane-spanning segment. Histidine 118 provides a ligand contact to chlorophyll a. A helical membrane pass occupies residues 125–141 (GFMLRQFELARPVQLRP). Pheophytin a-binding residues include glutamine 130 and asparagine 143. The chain crosses the membrane as a helical span at residues 153–166 (VFLSVFLIYPLGQS). Histidine 198 is a chlorophyll a binding site. Residues 208–228 (AVLLCAIHGATVENTLFEDGD) form a helical membrane-spanning segment. Residues histidine 215 and phenylalanine 262 each coordinate a plastoquinone. Histidine 215 contacts Fe cation. Histidine 269 contacts Fe cation. The helical transmembrane segment at 279–295 (GLWMSAIGVVGLALNLR) threads the bilayer.

The protein belongs to the reaction center PufL/M/PsbA/D family. As to quaternary structure, PSII is composed of 1 copy each of membrane proteins PsbA, PsbB, PsbC, PsbD, PsbE, PsbF, PsbH, PsbI, PsbJ, PsbK, PsbL, PsbM, PsbT, PsbX, PsbY, PsbZ, Psb30/Ycf12, at least 3 peripheral proteins of the oxygen-evolving complex and a large number of cofactors. It forms dimeric complexes. The D1/D2 heterodimer binds P680, chlorophylls that are the primary electron donor of PSII, and subsequent electron acceptors. It shares a non-heme iron and each subunit binds pheophytin, quinone, additional chlorophylls, carotenoids and lipids. There is also a Cl(-1) ion associated with D1 and D2, which is required for oxygen evolution. The PSII complex binds additional chlorophylls, carotenoids and specific lipids. serves as cofactor. Post-translationally, only phosphorylated in mesophyll cells, phosphorylation increases when cells are grown under high rather than low light regimes (70 vs 900 umol photons/m-2/s).

It is found in the plastid. Its subcellular location is the chloroplast thylakoid membrane. It carries out the reaction 2 a plastoquinone + 4 hnu + 2 H2O = 2 a plastoquinol + O2. Photosystem II (PSII) is a light-driven water:plastoquinone oxidoreductase that uses light energy to abstract electrons from H(2)O, generating O(2) and a proton gradient subsequently used for ATP formation. It consists of a core antenna complex that captures photons, and an electron transfer chain that converts photonic excitation into a charge separation. The D1/D2 (PsbA/PsbD) reaction center heterodimer binds P680, the primary electron donor of PSII as well as several subsequent electron acceptors. D2 is needed for assembly of a stable PSII complex. The chain is Photosystem II D2 protein from Zea mays (Maize).